The sequence spans 708 residues: Glycine--tRNA ligase beta subunit (708 aa).

This sequence belongs to the class-II aminoacyl-tRNA synthetase family. As to quaternary structure, tetramer of two alpha and two beta subunits.

The protein resides in the cytoplasm. The catalysed reaction is tRNA(Gly) + glycine + ATP = glycyl-tRNA(Gly) + AMP + diphosphate. The sequence is that of Glycine--tRNA ligase beta subunit from Paracidovorax citrulli (strain AAC00-1) (Acidovorax citrulli).